A 25-amino-acid chain; its full sequence is Omega-conotoxin MVIIB (25 aa).

3 disulfide bridges follow: C1–C16, C8–C20, and C15–C25. Position 25 is a cysteine amide (C25).

Belongs to the conotoxin O1 superfamily. As to expression, expressed by the venom duct.

The protein resides in the secreted. In terms of biological role, omega-conotoxins act at presynaptic membranes, they bind and block voltage-gated calcium channels (Cav). The polypeptide is Omega-conotoxin MVIIB (Conus magus (Magical cone)).